We begin with the raw amino-acid sequence, 3147 residues long: Probable polyketide synthase 1 (3147 aa).

The Ketosynthase family 3 (KS3) domain occupies 12 to 457 (SSDVAVIGVG…GSNCHLIIQE (446 aa)). Active-site for beta-ketoacyl synthase activity residues include Cys-180 and His-319. The disordered stretch occupies residues 345-369 (QLNNFSTDGNDNDDDDDDNTSPEPL). Residues 354–364 (NDNDDDDDDNT) show a composition bias toward acidic residues. His-380 serves as the catalytic For beta-ketoacyl synthase activity. Residues 672–705 (GIYPSISVGHSFGEVSSYYLSGIISLETACKIVY) form an acyl/malonyl transferase region. Ser-682 acts as the For acyl/malonyl transferase activity in catalysis. Positions 976–1127 (NRLEGPTTSL…ATISLEQQQP (152 aa)) are N-terminal hotdog fold. In terms of domain architecture, PKS/mFAS DH spans 976–1298 (NRLEGPTTSL…IKSTNPKSTK (323 aa)). His-1014 (proton acceptor; for dehydratase activity) is an active-site residue. The tract at residues 1149–1298 (DISKLDKFEL…IKSTNPKSTK (150 aa)) is C-terminal hotdog fold. Asp-1209 serves as the catalytic Proton donor; for dehydratase activity. Positions 2568 to 2645 (SSNISLQDKI…SFLEKVNGLS (78 aa)) constitute a Carrier domain. O-(pantetheine 4'-phosphoryl)serine is present on Ser-2605. A disordered region spans residues 2723–2747 (PSLSQSDVLKTPPIKSLNNTKNSSL). Residues 2738–2747 (SLNNTKNSSL) show a composition bias toward polar residues. The interval 2789–3147 (VLGIGISVPG…FEGCFLKNVV (359 aa)) is chalcone synthase. Cys-2930 is an active-site residue.

In the C-terminal section; belongs to the thiolase-like superfamily. Chalcone/stilbene synthases family. As to quaternary structure, homodimer. Pantetheine 4'-phosphate is required as a cofactor.

The catalysed reaction is (E)-4-coumaroyl-CoA + 3 malonyl-CoA + 3 H(+) = 2',4,4',6'-tetrahydroxychalcone + 3 CO2 + 4 CoA. It functions in the pathway secondary metabolite biosynthesis; flavonoid biosynthesis. Functionally, probable polyketide synthase. Produces only acylpyrones; in vitro. In Dictyostelium discoideum (Social amoeba), this protein is Probable polyketide synthase 1 (stlA).